The sequence spans 928 residues: Zinc metalloproteinase nas-39 (928 aa).

An N-terminal signal peptide occupies residues 1–30 (MRFSANIAIIVNIIFLFIVVEFVLPTFIRS). The 200-residue stretch at 48-247 (AATAKKERIW…RQTKKLYKCA (200 aa)) folds into the Peptidase M12A domain. N-linked (GlcNAc...) asparagine glycosylation is found at N69 and N87. Cystine bridges form between C90–C246, C111–C133, C113–C114, and C249–C268. Residue H141 participates in Zn(2+) binding. Residue E142 is part of the active site. Residues H145 and H151 each contribute to the Zn(2+) site. CUB domains are found at residues 249–359 (CGGT…YAIC) and 360–476 (GGPI…FTKE). The N-linked (GlcNAc...) asparagine glycan is linked to N283. 6 disulfides stabilise this stretch: C359/C385, C412/C439, C480/C491, C487/C500, C502/C515, and C519/C545. In terms of domain architecture, EGF-like 1; calcium-binding spans 477 to 516 (LNECATDKNICHHYCVNTVGGFKCACRVGYSLSSNGFSCD). A CUB 3 domain is found at 519–625 (CGGYLKASNG…DGFFANFIAD (107 aa)). N527 and N560 each carry an N-linked (GlcNAc...) asparagine glycan. Intrachain disulfides connect C573-C587, C629-C640, C636-C649, C651-C664, C669-C695, C722-C744, C782-C812, and C840-C863. One can recognise an EGF-like 2; calcium-binding domain in the interval 626–665 (FDECQNDNAGCEHTCQNRLGSYVCTCNPGYILAEDKHNCK). 2 consecutive CUB domains span residues 669–781 (CFFE…YTSL) and 782–900 (CGGR…YREA). N694 carries N-linked (GlcNAc...) asparagine glycosylation. Residues 895 to 928 (AEYREAPRSSSTKRTFVSKTRHSPLEEPIHDRNE) are disordered. Residues 902–912 (RSSSTKRTFVS) show a composition bias toward polar residues. The span at 917 to 928 (SPLEEPIHDRNE) shows a compositional bias: basic and acidic residues.

It depends on Zn(2+) as a cofactor. Expressed in pharyngeal, vulva and body wall muscles, intestine and several neurons.

The protein localises to the secreted. Functionally, metalloprotease. This Caenorhabditis elegans protein is Zinc metalloproteinase nas-39.